The following is a 157-amino-acid chain: UPF0262 protein Avi_0642 (157 aa).

This sequence belongs to the UPF0262 family.

The chain is UPF0262 protein Avi_0642 from Allorhizobium ampelinum (strain ATCC BAA-846 / DSM 112012 / S4) (Agrobacterium vitis (strain S4)).